A 202-amino-acid polypeptide reads, in one-letter code: ATP-dependent Clp protease proteolytic subunit (202 aa).

The active-site Nucleophile is Ser98. Residue His123 is part of the active site.

The protein belongs to the peptidase S14 family. In terms of assembly, fourteen ClpP subunits assemble into 2 heptameric rings which stack back to back to give a disk-like structure with a central cavity, resembling the structure of eukaryotic proteasomes.

The protein resides in the cytoplasm. The enzyme catalyses Hydrolysis of proteins to small peptides in the presence of ATP and magnesium. alpha-casein is the usual test substrate. In the absence of ATP, only oligopeptides shorter than five residues are hydrolyzed (such as succinyl-Leu-Tyr-|-NHMec, and Leu-Tyr-Leu-|-Tyr-Trp, in which cleavage of the -Tyr-|-Leu- and -Tyr-|-Trp bonds also occurs).. In terms of biological role, cleaves peptides in various proteins in a process that requires ATP hydrolysis. Has a chymotrypsin-like activity. Plays a major role in the degradation of misfolded proteins. The protein is ATP-dependent Clp protease proteolytic subunit of Magnetococcus marinus (strain ATCC BAA-1437 / JCM 17883 / MC-1).